The sequence spans 152 residues: Sec-independent protein translocase protein TatB (152 aa).

The chain crosses the membrane as a helical span at residues 1-21; the sequence is MFGISFSELLLVGLVALLVLG. Positions 98 to 115 are enriched in low complexity; the sequence is HAPGAATVAEAPPASEVP. Residues 98–152 form a disordered region; sequence HAPGAATVAEAPPASEVPAPLPSTPAPAPTAEPAAPVATPATTAPHDSTLPPRAP. A compositionally biased stretch (pro residues) spans 116 to 127; sequence APLPSTPAPAPT. Residues 128-142 show a composition bias toward low complexity; that stretch reads AEPAAPVATPATTAP.

This sequence belongs to the TatB family. In terms of assembly, the Tat system comprises two distinct complexes: a TatABC complex, containing multiple copies of TatA, TatB and TatC subunits, and a separate TatA complex, containing only TatA subunits. Substrates initially bind to the TatABC complex, which probably triggers association of the separate TatA complex to form the active translocon.

Its subcellular location is the cell inner membrane. In terms of biological role, part of the twin-arginine translocation (Tat) system that transports large folded proteins containing a characteristic twin-arginine motif in their signal peptide across membranes. Together with TatC, TatB is part of a receptor directly interacting with Tat signal peptides. TatB may form an oligomeric binding site that transiently accommodates folded Tat precursor proteins before their translocation. The sequence is that of Sec-independent protein translocase protein TatB from Pseudomonas fluorescens (strain ATCC BAA-477 / NRRL B-23932 / Pf-5).